The following is a 274-amino-acid chain: Isoprenyl transferase (274 aa).

Asp49 is a catalytic residue. Asp49 serves as a coordination point for Mg(2+). Substrate is bound by residues 50-53 (GNRR), Phe54, Arg62, His66, and 94-96 (STD). The active-site Proton acceptor is Asn97. Substrate is bound by residues Arg100, Arg223, and 229–231 (RLS). Glu242 contributes to the Mg(2+) binding site.

The protein belongs to the UPP synthase family. Homodimer. Mg(2+) is required as a cofactor.

In terms of biological role, catalyzes the condensation of isopentenyl diphosphate (IPP) with allylic pyrophosphates generating different type of terpenoids. This chain is Isoprenyl transferase, found in Deinococcus radiodurans (strain ATCC 13939 / DSM 20539 / JCM 16871 / CCUG 27074 / LMG 4051 / NBRC 15346 / NCIMB 9279 / VKM B-1422 / R1).